The primary structure comprises 180 residues: MTAGTVLLLAGALGTDAFSLCLGLGLNGFRRRMAWMLVGLIVALHVVLPVAGWYAGEFTGRLVGRWAAYLGAAILFYLGVKMVRESLAEGRTATGKLERAGFLGLTVLAGSVSMDALSVGFTLGTAGAALLLTAGVIGLVAGLMSAAAFVLAHRVEDWVGRRAELLGGLVLIGVGLRLLF.

The next 5 membrane-spanning stretches (helical) occupy residues 6–26 (VLLL…GLGL), 33–53 (MAWM…VAGW), 63–83 (VGRW…VKMV), 101–121 (GFLG…SVGF), and 130–150 (LLLT…AAFV).

The protein belongs to the MntP (TC 9.B.29) family.

It is found in the cell membrane. Its function is as follows. Probably functions as a manganese efflux pump. The polypeptide is Putative manganese efflux pump MntP (Desulforudis audaxviator (strain MP104C)).